A 162-amino-acid polypeptide reads, in one-letter code: MRISKPYLRSTSIQCYLCLLLNSHFLAEAGIHVFIFGCISAGLPKTEANWHDVISDLKRIEDLIKSIHIDATLYTESDAHPNCKVTAMKCFLLELRVISHESRNMDINETVQNLIILANTSLSSKGNVTESGCKECEELEEKNITEFLQSFIHIVQMFINSP.

A signal peptide spans 1–29; sequence MRISKPYLRSTSIQCYLCLLLNSHFLAEA. A propeptide spanning residues 30 to 48 is cleaved from the precursor; the sequence is GIHVFIFGCISAGLPKTEA. 2 disulfides stabilise this stretch: cysteine 83-cysteine 133 and cysteine 90-cysteine 136. 4 N-linked (GlcNAc...) asparagine glycosylation sites follow: asparagine 108, asparagine 119, asparagine 127, and asparagine 143.

Belongs to the IL-15/IL-21 family. As to expression, expressed in many tissues including heart, spleen, lung, liver, muscle and kidney (at mRNA level). Expressed in many tissues including heart, spleen, lung, liver, muscle and kidney (at protein level).

Its subcellular location is the secreted. Functionally, cytokine that plays a major role in the development of inflammatory and protective immune responses to microbial invaders and parasites by modulating immune cells of both the innate and adaptive immune systems. Stimulates the proliferation of natural killer cells, T-cells and B-cells and promotes the secretion of several cytokines. In monocytes, induces the production of IL8 and monocyte chemotactic protein 1/CCL2, two chemokines that attract neutrophils and monocytes respectively to sites of infection. Unlike most cytokines, which are secreted in soluble form, IL15 is expressed in association with its high affinity IL15RA on the surface of IL15-producing cells and delivers signals to target cells that express IL2RB and IL2RG receptor subunits. Binding to its receptor triggers the phosphorylation of JAK1 and JAK3 and the recruitment and subsequent phosphorylation of signal transducer and activator of transcription-3/STAT3 and STAT5. In mast cells, induces the rapid tyrosine phosphorylation of STAT6 and thereby controls mast cell survival and release of cytokines such as IL4. In Oryctolagus cuniculus (Rabbit), this protein is Interleukin-15 (IL15).